The sequence spans 3391 residues: Genome polyprotein (3391 aa).

The interaction with host EXOC1 stretch occupies residues 1–15; that stretch reads MNNQRKKARSTPFNM. Residues 1–101 are Cytoplasmic-facing; the sequence is MNNQRKKARS…LNILNRRRRT (101 aa). Positions 37–72 are hydrophobic; homodimerization of capsid protein C; it reads MLQGRGPLKLFMALVAFLRFLTIPPTAGILKRWGTI. A propeptide spans 101–114 (ER anchor for the capsid protein C, removed in mature form by serine protease NS3); the sequence is TAGVIIMLIPTAMA. Residues 102 to 119 form a helical membrane-spanning segment; that stretch reads AGVIIMLIPTAMAFHLTT. The Extracellular segment spans residues 120–241; the sequence is RNGEPHMIVG…KHVQRIETWI (122 aa). Asn183 carries an N-linked (GlcNAc...) asparagine; by host glycan. A helical transmembrane segment spans residues 242-259; sequence LRHPGFTIMAAILAYTIG. Over 260–265 the chain is Cytoplasmic; that stretch reads TTHFQR. Residues 266–280 traverse the membrane as a helical segment; the sequence is ALIFILLTAVAPSMT. Over 281–725 the chain is Extracellular; sequence MRCIGISNRD…LHQVFGAIYG (445 aa). Intrachain disulfides connect Cys283/Cys310, Cys340/Cys401, Cys354/Cys385, and Cys372/Cys396. The N-linked (GlcNAc...) asparagine; by host glycan is linked to Asn347. The tract at residues 378–391 is fusion peptide; the sequence is DRGWGNGCGLFGKG. Residue Asn433 is glycosylated (N-linked (GlcNAc...) asparagine; by host). 2 disulfide bridges follow: Cys465–Cys565 and Cys582–Cys613. A helical membrane pass occupies residues 726–746; it reads AAFSGVSWTMKILIGVIITWI. Residues 747 to 752 are Cytoplasmic-facing; sequence GMNSRS. The helical transmembrane segment at 753–773 threads the bilayer; sequence TSLSVSLVLVGVVTLYLGAMV. Over 774-1195 the chain is Extracellular; that stretch reads QADSGCVVSW…MVGATMTDDI (422 aa). Cystine bridges form between Cys779–Cys790, Cys830–Cys918, Cys954–Cys998, Cys1055–Cys1104, Cys1066–Cys1088, and Cys1087–Cys1091. N-linked (GlcNAc...) asparagine; by host glycans are attached at residues Asn905 and Asn982. An N-linked (GlcNAc...) asparagine; by host glycan is attached at Asn1134. The chain crosses the membrane as a helical span at residues 1196–1220; the sequence is GMGVTYLALLAAFKVRPTFAAGLLL. The Cytoplasmic segment spans residues 1221-1226; it reads RKLTSK. Residues 1227–1245 form a helical membrane-spanning segment; the sequence is ELMMATIGIALLSQSTIPE. At 1246–1269 the chain is on the lumenal side; it reads TILELTDALALGMMVLKIVRNMEK. The helical transmembrane segment at 1270-1290 threads the bilayer; sequence YQLAVTIMAILCVPNAVILQN. Ala1291 is a topological domain (cytoplasmic). A helical membrane pass occupies residues 1292 to 1310; sequence WKVSCTILAAVSVSPLLLT. Over 1311–1317 the chain is Lumenal; it reads SSQQKAD. The helical transmembrane segment at 1318–1338 threads the bilayer; it reads WIPLALTIKGLNPTAIFLTTL. The Cytoplasmic portion of the chain corresponds to 1339–1346; sequence SRTSKKRS. Residues 1347-1367 traverse the membrane as a helical segment; that stretch reads WPLNEAIMAVGMVSILASSLL. Over 1368–1370 the chain is Lumenal; sequence KND. The chain crosses the membrane as a helical span at residues 1371–1391; it reads IPMTGPLVAGGLLTVCYVLTG. The Cytoplasmic portion of the chain corresponds to 1392–1447; the sequence is RSADLELERAADVKWEDQAEISGSSPILSITISEDGSMSIKNEEEEQTLTILIRTG. The tract at residues 1398-1437 is interacts with and activates NS3 protease; that stretch reads LERAADVKWEDQAEISGSSPILSITISEDGSMSIKNEEEE. The helical intramembrane region spans 1448–1468; sequence LLVISGVFPVSIPITAAAWYL. Residues 1469 to 2147 lie on the Cytoplasmic side of the membrane; sequence WEVKKQRAGV…LSELPETLET (679 aa). Positions 1476–1653 constitute a Peptidase S7 domain; that stretch reads AGVLWDVPSP…EKSIEDNPEI (178 aa). Catalysis depends on charge relay system; for serine protease NS3 activity residues His1526, Asp1550, and Ser1610. The 157-residue stretch at 1655 to 1811 folds into the Helicase ATP-binding domain; the sequence is DDIFRKKRLT…QSNAPIMDEE (157 aa). The interval 1659 to 1662 is important for RNA-binding; that stretch reads RKKR. Residue 1668–1675 coordinates ATP; the sequence is LHPGAGKT. A DEAH box motif is present at residues 1759–1762; it reads DEAH. The Helicase C-terminal domain occupies 1821 to 1988; that stretch reads SGHEWVTDFK…IIPSMFEPER (168 aa). Position 1863 is an N6-acetyllysine; by host (Lys1863). The helical transmembrane segment at 2148-2168 threads the bilayer; sequence LLLLTLLATVTGGIFLFLMSG. Over 2169-2170 the chain is Lumenal; the sequence is KG. The segment at residues 2171–2191 is an intramembrane region (helical); that stretch reads IGKMTLGMCCIITASILLWYA. Position 2192 (Gln2192) is a topological domain, lumenal. The chain crosses the membrane as a helical span at residues 2193 to 2213; that stretch reads IQPHWIAASIILEFFLIVLLI. Residues 2214-2228 lie on the Cytoplasmic side of the membrane; sequence PEPEKQRTPQDNQLT. The helical transmembrane segment at 2229 to 2249 threads the bilayer; sequence YVVIAILTVVAATMANEMGFL. The Lumenal portion of the chain corresponds to 2250–2274; it reads EKTKKDLGLGSITTQESESNILDID. Residues 2275–2295 constitute an intramembrane region (helical); the sequence is LRPASAWTLYAVATTFVTPML. Topologically, residues 2296-2316 are lumenal; sequence RHSIENSSVNVSLTAIANQAT. Asn2301 and Asn2305 each carry an N-linked (GlcNAc...) asparagine; by host glycan. The helical intramembrane region spans 2317–2337; sequence VLMGLGKGWPLSKIHIGVPLL. Topologically, residues 2338–2347 are lumenal; it reads AIGCYSQVNP. The helical transmembrane segment at 2348 to 2368 threads the bilayer; the sequence is ITLTAALLLLVAHYAIIGPGL. Over 2369 to 2413 the chain is Cytoplasmic; sequence QAKATREAQKRAAAGIMKNPTVDGITVIDLDPIPYDPKFEKQLGQ. A helical transmembrane segment spans residues 2414 to 2434; that stretch reads VMLLILCVTQVLMMRTTWALC. Over 2435 to 2459 the chain is Lumenal; sequence EALTLATGPISTLWEGNPGRFWNTT. N-linked (GlcNAc...) asparagine; by host glycosylation occurs at Asn2457. A helical membrane pass occupies residues 2460–2480; that stretch reads IAVSMANIFRGSYLAGAGLLF. Topologically, residues 2481 to 3391 are cytoplasmic; the sequence is SIMKNTTNTR…REEEEAGVLW (911 aa). An mRNA cap 0-1 NS5-type MT domain is found at 2493-2755; that stretch reads TGNIGETLGE…DVDLGSGTRN (263 aa). Ser2547 contributes to the S-adenosyl-L-methionine binding site. Ser2547 carries the phosphoserine modification. Residue Lys2552 is the For 2'-O-MTase activity of the active site. The SUMO-interacting motif motif lies at 2568–2571; the sequence is VVDL. The S-adenosyl-L-methionine site is built by Gly2577, Trp2578, Thr2595, Lys2596, Asp2622, and Val2623. Asp2637 (for 2'-O-MTase activity) is an active-site residue. Ile2638 is a binding site for S-adenosyl-L-methionine. Residues Lys2672 and Glu2708 each act as for 2'-O-MTase activity in the active site. An S-adenosyl-L-methionine-binding site is contributed by Tyr2710. Glu2929, His2933, Cys2938, and Cys2941 together coordinate Zn(2+). The 150-residue stretch at 3020-3169 folds into the RdRp catalytic domain; it reads AMYADDTAGW…PLDDRFASAL (150 aa). 3 residues coordinate Zn(2+): His3203, Cys3219, and Cys3338.

The protein in the N-terminal section; belongs to the class I-like SAM-binding methyltransferase superfamily. mRNA cap 0-1 NS5-type methyltransferase family. In terms of assembly, homodimer. Interacts (via N-terminus) with host EXOC1 (via C-terminus); this interaction results in EXOC1 degradation through the proteasome degradation pathway. Forms heterodimers with envelope protein E in the endoplasmic reticulum and Golgi. As to quaternary structure, homodimer; in the endoplasmic reticulum and Golgi. Interacts with protein prM. Interacts with non-structural protein 1. In terms of assembly, homodimer; Homohexamer when secreted. Interacts with envelope protein E. Interacts with host PRKAA1. Interacts (via N-terminus) with serine protease NS3. As to quaternary structure, forms a heterodimer with serine protease NS3. May form homooligomers. In terms of assembly, forms a heterodimer with NS2B. Interacts with NS4B. Interacts with unphosphorylated RNA-directed RNA polymerase NS5; this interaction stimulates RNA-directed RNA polymerase NS5 guanylyltransferase activity. Interacts with host SHFL. Interacts with host MAVS; this interaction inhibits the synthesis of IFN-beta. Interacts with host SHFL. Interacts with host AUP1; the interaction occurs in the presence of Dengue virus NS4B and induces lipophagy which facilitates production of virus progeny particles. May interact with host SRPRA and SEC61G. As to quaternary structure, interacts with serine protease NS3. In terms of assembly, homodimer. Interacts with host STAT2; this interaction inhibits the phosphorylation of the latter, and, when all viral proteins are present (polyprotein), targets STAT2 for degradation. Interacts with serine protease NS3. Interacts with host PAF1 complex; the interaction may prevent the recruitment of the PAF1 complex to interferon-responsive genes, and thus reduces the immune response. Post-translationally, specific enzymatic cleavages in vivo yield mature proteins. Cleavages in the lumen of endoplasmic reticulum are performed by host signal peptidase, whereas cleavages in the cytoplasmic side are performed by serine protease NS3. Signal cleavage at the 2K-4B site requires a prior NS3 protease-mediated cleavage at the 4A-2K site. In terms of processing, cleaved in post-Golgi vesicles by a host furin, releasing the mature small envelope protein M, and peptide pr. This cleavage is incomplete as up to 30% of viral particles still carry uncleaved prM. N-glycosylated. Post-translationally, N-glycosylated. The excreted form is glycosylated and this is required for efficient secretion of the protein from infected cells. In terms of processing, acetylated by host KAT5. Acetylation modulates NS3 RNA-binding and unwinding activities and plays an important positive role for viral replication. Sumoylation of RNA-directed RNA polymerase NS5 increases NS5 protein stability allowing proper viral RNA replication. Post-translationally, phosphorylated on serines residues. This phosphorylation may trigger NS5 nuclear localization.

Its subcellular location is the virion. The protein localises to the host nucleus. It is found in the host cytoplasm. The protein resides in the host perinuclear region. It localises to the secreted. Its subcellular location is the virion membrane. The protein localises to the host endoplasmic reticulum membrane. It is found in the host mitochondrion. The enzyme catalyses Selective hydrolysis of -Xaa-Xaa-|-Yaa- bonds in which each of the Xaa can be either Arg or Lys and Yaa can be either Ser or Ala.. It catalyses the reaction RNA(n) + a ribonucleoside 5'-triphosphate = RNA(n+1) + diphosphate. It carries out the reaction a ribonucleoside 5'-triphosphate + H2O = a ribonucleoside 5'-diphosphate + phosphate + H(+). The catalysed reaction is ATP + H2O = ADP + phosphate + H(+). The enzyme catalyses a 5'-end (5'-triphosphoguanosine)-ribonucleoside in mRNA + S-adenosyl-L-methionine = a 5'-end (N(7)-methyl 5'-triphosphoguanosine)-ribonucleoside in mRNA + S-adenosyl-L-homocysteine. It catalyses the reaction a 5'-end (N(7)-methyl 5'-triphosphoguanosine)-ribonucleoside in mRNA + S-adenosyl-L-methionine = a 5'-end (N(7)-methyl 5'-triphosphoguanosine)-(2'-O-methyl-ribonucleoside) in mRNA + S-adenosyl-L-homocysteine + H(+). Plays a role in virus budding by binding to the cell membrane and gathering the viral RNA into a nucleocapsid that forms the core of a mature virus particle. During virus entry, may induce genome penetration into the host cytoplasm after hemifusion induced by the surface proteins. Can migrate to the cell nucleus where it modulates host functions. Overcomes the anti-viral effects of host EXOC1 by sequestering and degrading the latter through the proteasome degradation pathway. Functionally, inhibits RNA silencing by interfering with host Dicer. Its function is as follows. Prevents premature fusion activity of envelope proteins in trans-Golgi by binding to envelope protein E at pH6.0. After virion release in extracellular space, gets dissociated from E dimers. In terms of biological role, acts as a chaperone for envelope protein E during intracellular virion assembly by masking and inactivating envelope protein E fusion peptide. prM is the only viral peptide matured by host furin in the trans-Golgi network probably to avoid catastrophic activation of the viral fusion activity in acidic Golgi compartment prior to virion release. prM-E cleavage is inefficient, and many virions are only partially matured. These uncleaved prM would play a role in immune evasion. May play a role in virus budding. Exerts cytotoxic effects by activating a mitochondrial apoptotic pathway through M ectodomain. May display a viroporin activity. Functionally, binds to host cell surface receptor and mediates fusion between viral and cellular membranes. Envelope protein is synthesized in the endoplasmic reticulum in the form of heterodimer with protein prM. They play a role in virion budding in the ER, and the newly formed immature particle is covered with 60 spikes composed of heterodimer between precursor prM and envelope protein E. The virion is transported to the Golgi apparatus where the low pH causes dissociation of PrM-E heterodimers and formation of E homodimers. prM-E cleavage is inefficient, and many virions are only partially matured. These uncleaved prM would play a role in immune evasion. Its function is as follows. Involved in immune evasion, pathogenesis and viral replication. Once cleaved off the polyprotein, is targeted to three destinations: the viral replication cycle, the plasma membrane and the extracellular compartment. Essential for viral replication. Required for formation of the replication complex and recruitment of other non-structural proteins to the ER-derived membrane structures. Excreted as a hexameric lipoparticle that plays a role against host immune response. Antagonizing the complement function. Binds to the host macrophages and dendritic cells. Inhibits signal transduction originating from Toll-like receptor 3 (TLR3). In terms of biological role, involved in immune evasion, pathogenesis and viral replication. Once cleaved off the polyprotein, is targeted to three destinations: the viral replication cycle, the plasma membrane and the extracellular compartment. Essential for viral replication. Required for formation of the replication complex and recruitment of other non-structural proteins to the ER-derived membrane structures. Excreted as a hexameric lipoparticle that plays a role against host immune response. Antagonizing the complement function. Binds to the host macrophages and dendritic cells. Inhibits signal transduction originating from Toll-like receptor 3 (TLR3). Mediates complement activation, which may contribute to the pathogenesis of the vascular leakage that occurs in severe dengue disease. Activates autophagy through the AMPK/ERK/mTOR signaling pathway. Mechanistically, acts as the assembly platform for STK11-AMPK interactions and promotes STK11-AMPK interactions. In turn, promotes phosphorylation of the AMPK kinase structural domain and activates AMPK, thereby positively regulating the AMPK/ERK/mTOR signaling pathway and inducing autophagy. Component of the viral RNA replication complex that functions in virion assembly and antagonizes the host immune response. Functionally, required cofactor for the serine protease function of NS3. May have membrane-destabilizing activity and form viroporins. Its function is as follows. Displays three enzymatic activities: serine protease, NTPase and RNA helicase. NS3 serine protease, in association with NS2B, performs its autocleavage and cleaves the polyprotein at dibasic sites in the cytoplasm: C-prM, NS2A-NS2B, NS2B-NS3, NS3-NS4A, NS4A-2K and NS4B-NS5. NS3 RNA helicase binds RNA and unwinds dsRNA in the 3' to 5' direction. In terms of biological role, regulates the ATPase activity of the NS3 helicase activity. NS4A allows NS3 helicase to conserve energy during unwinding. Plays a role in the inhibition of the host innate immune response. Interacts with host MAVS and thereby prevents the interaction between RIGI and MAVS. In turn, IFN-beta production is impaired. Interacts with host AUP1 which mediates induction of lipophagy in host cells and facilitates production of virus progeny particles. Functions as a signal peptide for NS4B and is required for the interferon antagonism activity of the latter. Functionally, induces the formation of ER-derived membrane vesicles where the viral replication takes place. Inhibits interferon (IFN)-induced host STAT1 phosphorylation and nuclear translocation, thereby preventing the establishment of cellular antiviral state by blocking the IFN-alpha/beta pathway. Its function is as follows. Replicates the viral (+) and (-) RNA genome, and performs the capping of genomes in the cytoplasm. NS5 methylates viral RNA cap at guanine N-7 and ribose 2'-O positions. Besides its role in RNA genome replication, also prevents the establishment of cellular antiviral state by blocking the interferon-alpha/beta (IFN-alpha/beta) signaling pathway. Inhibits host TYK2 and STAT2 phosphorylation, thereby preventing activation of JAK-STAT signaling pathway. May reduce immune responses by preventing the recruitment of the host PAF1 complex to interferon-responsive genes. This chain is Genome polyprotein, found in Dengue virus type 2 (strain Jamaica/1409/1983) (DENV-2).